Here is a 641-residue protein sequence, read N- to C-terminus: Mannosyl-oligosaccharide 1,2-alpha-mannosidase IB (641 aa).

Thr2 bears the N-acetylthreonine mark. Residues 2–36 (TTPALLPLSGRRIPPLNLGPPSFPHHRATLRLSEK) lie on the Cytoplasmic side of the membrane. The chain crosses the membrane as a helical; Signal-anchor for type II membrane protein span at residues 37 to 57 (FILLLILSAFITLCFGAFFFL). Residues 58-641 (PDSSKHKRFD…STLSGNPAVR (584 aa)) lie on the Lumenal side of the membrane. A disulfide bond links Cys462 and Cys494. Glu508 serves as the catalytic Proton donor. Residue Thr619 coordinates Ca(2+). A glycan (N-linked (GlcNAc...) asparagine) is linked at Asn631.

It belongs to the glycosyl hydrolase 47 family. The cofactor is Ca(2+).

It localises to the golgi apparatus membrane. It catalyses the reaction N(4)-(alpha-D-Man-(1-&gt;2)-alpha-D-Man-(1-&gt;2)-alpha-D-Man-(1-&gt;3)-[alpha-D-Man-(1-&gt;2)-alpha-D-Man-(1-&gt;3)-[alpha-D-Man-(1-&gt;2)-alpha-D-Man-(1-&gt;6)]-alpha-D-Man-(1-&gt;6)]-beta-D-Man-(1-&gt;4)-beta-D-GlcNAc-(1-&gt;4)-beta-D-GlcNAc)-L-asparaginyl-[protein] (N-glucan mannose isomer 9A1,2,3B1,2,3) + 4 H2O = N(4)-(alpha-D-Man-(1-&gt;3)-[alpha-D-Man-(1-&gt;3)-[alpha-D-Man-(1-&gt;6)]-alpha-D-Man-(1-&gt;6)]-beta-D-Man-(1-&gt;4)-beta-D-GlcNAc-(1-&gt;4)-beta-D-GlcNAc)-L-asparaginyl-[protein] (N-glucan mannose isomer 5A1,2) + 4 beta-D-mannose. The catalysed reaction is N(4)-(alpha-D-Man-(1-&gt;2)-alpha-D-Man-(1-&gt;2)-alpha-D-Man-(1-&gt;3)-[alpha-D-Man-(1-&gt;3)-[alpha-D-Man-(1-&gt;2)-alpha-D-Man-(1-&gt;6)]-alpha-D-Man-(1-&gt;6)]-beta-D-Man-(1-&gt;4)-beta-D-GlcNAc-(1-&gt;4)-beta-D-GlcNAc)-L-asparaginyl-[protein] (N-glucan mannose isomer 8A1,2,3B1,3) + 3 H2O = N(4)-(alpha-D-Man-(1-&gt;3)-[alpha-D-Man-(1-&gt;3)-[alpha-D-Man-(1-&gt;6)]-alpha-D-Man-(1-&gt;6)]-beta-D-Man-(1-&gt;4)-beta-D-GlcNAc-(1-&gt;4)-beta-D-GlcNAc)-L-asparaginyl-[protein] (N-glucan mannose isomer 5A1,2) + 3 beta-D-mannose. It participates in protein modification; protein glycosylation. Inhibited by both 1-deoxymannojirimycin and kifunensine. Its function is as follows. Involved in the maturation of Asn-linked oligosaccharides. Progressively trim alpha-1,2-linked mannose residues from Man(9)GlcNAc(2) to produce Man(5)GlcNAc(2). In Mus musculus (Mouse), this protein is Mannosyl-oligosaccharide 1,2-alpha-mannosidase IB (Man1a2).